Consider the following 550-residue polypeptide: uncharacterized protein (550 aa).

The signal sequence occupies residues 1–13; sequence MAGALFEPSFAAA. The tract at residues 312–358 is disordered; sequence DAQPDPHLSGDEPPSRPLTPETTLFEALTPDPEPDPPATHAPAELIT.

It to M.tuberculosis Rv3776.

This is an uncharacterized protein from Mycobacterium tuberculosis (strain CDC 1551 / Oshkosh).